The sequence spans 160 residues: Large ribosomal subunit protein uL22c (160 aa).

Belongs to the universal ribosomal protein uL22 family. In terms of assembly, part of the 50S ribosomal subunit.

The protein resides in the plastid. Its subcellular location is the chloroplast. Functionally, this protein binds specifically to 23S rRNA. Its function is as follows. The globular domain of the protein is located near the polypeptide exit tunnel on the outside of the subunit, while an extended beta-hairpin is found that lines the wall of the exit tunnel in the center of the 70S ribosome. The protein is Large ribosomal subunit protein uL22c (rpl22) of Lepidium virginicum (Virginia pepperweed).